The following is a 336-amino-acid chain: Atypical chemokine receptor 1 (336 aa).

Residues 1–30 form a mediates Plasmodium vivax Duffy receptor (PVDR) binding region; the sequence is MGNCLHRAELSPSTENSSQLDFEDVWNSSY. At 1 to 63 the chain is on the extracellular side; it reads MGNCLHRAEL…CNLLDDSALP (63 aa). Asn16 carries an N-linked (GlcNAc...) asparagine glycan. Tyr30 carries the sulfotyrosine modification. Asn33 is a glycosylation site (N-linked (GlcNAc...) asparagine). Tyr41 carries the sulfotyrosine modification. Intrachain disulfides connect Cys51/Cys276 and Cys129/Cys195. The chain crosses the membrane as a helical span at residues 64–84; sequence FFILTSVLGILASSTVLFMLF. Over 85-95 the chain is Cytoplasmic; sequence RPLFRWQLCPG. Residues 96–116 form a helical membrane-spanning segment; the sequence is WPVLAQLAVGSALFSIVVPVL. The Extracellular segment spans residues 117-129; sequence APGLGSTRSSALC. The chain crosses the membrane as a helical span at residues 130–153; that stretch reads SLGYCVWYGSAFAQALLLGCHASL. At 154 to 166 the chain is on the cytoplasmic side; it reads GHRLGAGQVPGLT. The helical transmembrane segment at 167 to 187 threads the bilayer; the sequence is LGLTVGIWGVAALLTLPVTLA. Residues 188 to 207 lie on the Extracellular side of the membrane; the sequence is SGASGGLCTLIYSTELKALQ. Residues 208 to 228 form a helical membrane-spanning segment; the sequence is ATHTVACLAIFVLLPLGLFGA. Over 229 to 244 the chain is Cytoplasmic; it reads KGLKKALGMGPGPWMN. The helical transmembrane segment at 245-265 threads the bilayer; that stretch reads ILWAWFIFWWPHGVVLGLDFL. Residues 266–287 are Extracellular-facing; it reads VRSKLLLLSTCLAQQALDLLLN. A helical membrane pass occupies residues 288-308; that stretch reads LAEALAILHCVATPLLLALFC. The Cytoplasmic segment spans residues 309–336; that stretch reads HQATRTLLPSLPLPEGWSSHLDTLGSKS.

This sequence belongs to the G-protein coupled receptor 1 family. Atypical chemokine receptor subfamily. (Microbial infection) Interacts (via N-terminal extracellular domain) with Plasmodium vivax Duffy receptor (PVDR) (via PvRII region). As to quaternary structure, (Microbial infection) Interacts (via N-terminal extracellular domain) with Plasmodium knowlesi Duffy receptor alpha form (DBPalpha) (via region II). In terms of processing, sulfation at Tyr-41 facilitates interaction with MGSA/CXCL1, RANTES/CCL5 and MCP-1/CCL2 but not IL8/CXCL8. Sulfation at Tyr-30 facilitates interaction with IL8/CXCL8. Post-translationally, (Microbial infection) Sulfation at Tyr-41 facilitates interaction with Plasmodium vivax Duffy receptor (PVDR). Sulfation at Tyr-30/Tyr-41 and Tyr-41 alone increases binding affinity of Plasmodium vivax parasites and likely promotes invasion of red blood cells. (Microbial infection) Sulfation at Tyr-41 facilitates interaction with Plasmodium knowlesi Duffy receptor alpha form (DBPalpha). Sulfation at Tyr-30/Tyr-41 and Tyr-41 alone increases binding affinity of Plasmodium knowlesi parasites and likely promotes invasion of red blood cells. In terms of tissue distribution, found in adult kidney, adult spleen, bone marrow and fetal liver. In particular, it is expressed along postcapillary venules throughout the body, except in the adult liver. Erythroid cells and postcapillary venule endothelium are the principle tissues expressing duffy. Fy(-A-B) individuals do not express duffy in the bone marrow, however they do, in postcapillary venule endothelium.

The protein localises to the early endosome. The protein resides in the recycling endosome. Its subcellular location is the membrane. Functionally, atypical chemokine receptor that controls chemokine levels and localization via high-affinity chemokine binding that is uncoupled from classic ligand-driven signal transduction cascades, resulting instead in chemokine sequestration, degradation, or transcytosis. Also known as interceptor (internalizing receptor) or chemokine-scavenging receptor or chemokine decoy receptor. Has a promiscuous chemokine-binding profile, interacting with inflammatory chemokines of both the CXC and the CC subfamilies but not with homeostatic chemokines. Acts as a receptor for chemokines including CCL2, CCL5, CCL7, CCL11, CCL13, CCL14, CCL17, CXCL5, CXCL6, IL8/CXCL8, CXCL11, GRO, RANTES, MCP-1 and TARC. May regulate chemokine bioavailability and, consequently, leukocyte recruitment through two distinct mechanisms: when expressed in endothelial cells, it sustains the abluminal to luminal transcytosis of tissue-derived chemokines and their subsequent presentation to circulating leukocytes; when expressed in erythrocytes, serves as blood reservoir of cognate chemokines but also as a chemokine sink, buffering potential surges in plasma chemokine levels. Its function is as follows. (Microbial infection) Acts as a receptor for the malaria parasite Plasmodium vivax. (Microbial infection) Acts as a receptor for the malaria parasite Plasmodium knowlesi. This chain is Atypical chemokine receptor 1 (ACKR1), found in Homo sapiens (Human).